We begin with the raw amino-acid sequence, 725 residues long: Ferric reduction oxidase 2 (725 aa).

The Cytoplasmic segment spans residues 1-28 (MEIEKSNNGGSNPSAGEEFKDMIKGVTK). Residues 29–48 (FLMMVIFLGTIMLWIMMPTL) form a helical membrane-spanning segment. Residues 49–74 (TYRTKWLPHLRIKFGTSTYFGATGTT) lie on the Extracellular side of the membrane. A helical membrane pass occupies residues 75–93 (LFMYMFPMMVVACLGCVYL). The Cytoplasmic portion of the chain corresponds to 94–125 (HFKNRKSPHHIDRETKGGVWSKLRKPMLVKGP). Residues 126–149 (LGIVSVTEITFLAMFVALLLWCFI) traverse the membrane as a helical segment. Over 150–217 (TYLRNSFATI…MGLTSESSIK (68 aa)) the chain is Extracellular. Residues 183–303 (LGLIGNICLA…YLYIVFMLFF (121 aa)) form the Ferric oxidoreductase domain. A helical membrane pass occupies residues 218–241 (YHIWLGHMVMALFTVHGLCYIIYW). The heme site is built by His-219 and His-233. The Cytoplasmic segment spans residues 242–291 (ASMHEISQMIMWDTKGVSNLAGEIALAAGLVMWATTYPKIRRRFFEVFFY). The helical transmembrane segment at 292 to 316 (THYLYIVFMLFFVLHVGISFSFIAL) threads the bilayer. Residues His-293 and His-306 each coordinate heme. Residues 317–338 (PGFYIFLVDRFLRFLQSRENVR) are Extracellular-facing. Positions 332-437 (QSRENVRLLA…EGPYGPASAD (106 aa)) constitute an FAD-binding FR-type domain. The helical transmembrane segment at 339 to 359 (LLAARILPSDTMELTFSKNSK) threads the bilayer. Residues 360-554 (LVYSPTSIMF…SISSILGPNS (195 aa)) lie on the Cytoplasmic side of the membrane. Residue 381 to 384 (HPFT) coordinates FAD. 429–432 (GPYG) is an NAD(+) binding site. Residues 555 to 577 (WLWLGAILASSFLIFMIIIGIIT) traverse the membrane as a helical segment. Over 578 to 597 (RYYIYPIDHNTNKIYSLTSK) the chain is Extracellular. A helical membrane pass occupies residues 598–619 (TIIYILVISVSIMATCSAAMLW). Over 620 to 725 (NKKKYGKVES…LHFESISFSW (106 aa)) the chain is Cytoplasmic.

The protein belongs to the ferric reductase (FRE) family. It depends on FAD as a cofactor. In terms of tissue distribution, expressed in the epidermal cells of the roots. High expression in lateral roots and root hairs. Detected in leaves, stems, siliques and in flowers in anthers and styles.

Its subcellular location is the cell membrane. It carries out the reaction 2 a Fe(II)-siderophore + NAD(+) + H(+) = 2 a Fe(III)-siderophore + NADH. Flavocytochrome that transfers electrons across the plasma membrane to reduce ferric iron chelates to form soluble ferrous iron in the rhizosphere. May be involved in the delivery of iron to developing pollen grains. Also acts as a copper-chelate reductase. Involved in glycine betaine-mediated chilling tolerance and reactive oxygen species accumulation. The sequence is that of Ferric reduction oxidase 2 (FRO2) from Arabidopsis thaliana (Mouse-ear cress).